A 267-amino-acid polypeptide reads, in one-letter code: Glucosamine-6-phosphate deaminase (267 aa).

Asp72 acts as the Proton acceptor; for enolization step in catalysis. Asp141 functions as the For ring-opening step in the catalytic mechanism. The active-site Proton acceptor; for ring-opening step is the His143. The For ring-opening step role is filled by Glu148.

The protein belongs to the glucosamine/galactosamine-6-phosphate isomerase family. NagB subfamily. In terms of assembly, homohexamer.

It catalyses the reaction alpha-D-glucosamine 6-phosphate + H2O = beta-D-fructose 6-phosphate + NH4(+). It participates in amino-sugar metabolism; N-acetylneuraminate degradation; D-fructose 6-phosphate from N-acetylneuraminate: step 5/5. Its activity is regulated as follows. Allosterically activated by N-acetylglucosamine 6-phosphate (GlcNAc6P). In terms of biological role, catalyzes the reversible isomerization-deamination of glucosamine 6-phosphate (GlcN6P) to form fructose 6-phosphate (Fru6P) and ammonium ion. In Haemophilus ducreyi (strain 35000HP / ATCC 700724), this protein is Glucosamine-6-phosphate deaminase.